A 679-amino-acid chain; its full sequence is uncharacterized protein (679 aa).

The next 12 helical transmembrane spans lie at 23–41, 46–65, 72–90, 94–113, 120–142, 157–179, 362–381, 385–404, 411–433, 438–455, 462–481, and 496–515; these read YALRNTIAMCLALTFAYYL, PYWAMTSAAVVSFPTVGGVI, IAGSLLGATAALIIAGHTL, WLFLFSMAAWIGFCTWACAH, YAFQLSGYTAAIIAFPMVNIVEI, IVGILCGGMMMMILPSTSDGTAL, WSGVRTFCTLTVIGAWSIGA, SGPGALTLAAISCVLYSIVA, SLLMRTLVLLSLFSFVVKFGLMV, LWQFLLFLFPLFVTMQLL, LAGLWGQLIVFMGSFIAVTN, and AKIVGVAISWLAFAILRPGS.

This sequence belongs to the aromatic acid exporter ArAE (TC 2.A.85) family.

It localises to the cell membrane. This is an uncharacterized protein from Salmonella typhimurium (strain LT2 / SGSC1412 / ATCC 700720).